Consider the following 612-residue polypeptide: UvrABC system protein C (612 aa).

The region spanning 11-90 (TASGVYLMKG…IKKYRPRYNI (80 aa)) is the GIY-YIG domain. Residues 200–235 (SEVVESLQHQMAAAAERMAFEEAARLRDQLRAIEQT) enclose the UVR domain.

Belongs to the UvrC family. As to quaternary structure, interacts with UvrB in an incision complex.

It localises to the cytoplasm. The UvrABC repair system catalyzes the recognition and processing of DNA lesions. UvrC both incises the 5' and 3' sides of the lesion. The N-terminal half is responsible for the 3' incision and the C-terminal half is responsible for the 5' incision. This is UvrABC system protein C from Syntrophotalea carbinolica (strain DSM 2380 / NBRC 103641 / GraBd1) (Pelobacter carbinolicus).